The primary structure comprises 672 residues: uncharacterized protein (672 aa).

Belongs to the MG032/MG096/MG288 family.

This is an uncharacterized protein from Mycoplasma pneumoniae (strain ATCC 29342 / M129 / Subtype 1) (Mycoplasmoides pneumoniae).